A 127-amino-acid polypeptide reads, in one-letter code: Large ribosomal subunit protein bL12 (127 aa).

The protein belongs to the bacterial ribosomal protein bL12 family. As to quaternary structure, homodimer. Part of the ribosomal stalk of the 50S ribosomal subunit. Forms a multimeric L10(L12)X complex, where L10 forms an elongated spine to which 2 to 4 L12 dimers bind in a sequential fashion. Binds GTP-bound translation factors.

In terms of biological role, forms part of the ribosomal stalk which helps the ribosome interact with GTP-bound translation factors. Is thus essential for accurate translation. In Desulforapulum autotrophicum (strain ATCC 43914 / DSM 3382 / VKM B-1955 / HRM2) (Desulfobacterium autotrophicum), this protein is Large ribosomal subunit protein bL12.